We begin with the raw amino-acid sequence, 65 residues long: White colony protein WHS11 (65 aa).

A compositionally biased stretch (basic and acidic residues) spans 1 to 17 (MSDLGRKDIGDKIESKL). The interval 1-32 (MSDLGRKDIGDKIESKLTPDSQKSTPEQFKDK) is disordered. Positions 18–27 (TPDSQKSTPE) are enriched in polar residues.

To yeast HSP12/GLP1 and S.pombe hsp9.

This chain is White colony protein WHS11 (WHS11), found in Candida albicans (strain WO-1) (Yeast).